A 380-amino-acid chain; its full sequence is Chaperone protein DnaJ (380 aa).

The region spanning 5-70 (DFYEVLGVSR…QKRAAYDQYG (66 aa)) is the J domain. The CR-type zinc-finger motif lies at 135 to 213 (GCEKDIEIPT…CHGDGRVQKT (79 aa)). Positions 148, 151, 165, 168, 187, 190, 201, and 204 each coordinate Zn(2+). CXXCXGXG motif repeat units follow at residues 148–155 (CEPCDGTG), 165–172 (CSTCHGQG), 187–194 (CPTCHGKG), and 201–208 (CNSCHGDG).

Belongs to the DnaJ family. As to quaternary structure, homodimer. Zn(2+) is required as a cofactor.

The protein localises to the cytoplasm. In terms of biological role, participates actively in the response to hyperosmotic and heat shock by preventing the aggregation of stress-denatured proteins and by disaggregating proteins, also in an autonomous, DnaK-independent fashion. Unfolded proteins bind initially to DnaJ; upon interaction with the DnaJ-bound protein, DnaK hydrolyzes its bound ATP, resulting in the formation of a stable complex. GrpE releases ADP from DnaK; ATP binding to DnaK triggers the release of the substrate protein, thus completing the reaction cycle. Several rounds of ATP-dependent interactions between DnaJ, DnaK and GrpE are required for fully efficient folding. Also involved, together with DnaK and GrpE, in the DNA replication of plasmids through activation of initiation proteins. This Aliivibrio salmonicida (strain LFI1238) (Vibrio salmonicida (strain LFI1238)) protein is Chaperone protein DnaJ.